Reading from the N-terminus, the 378-residue chain is tRNA (guanine(26)-N(2))-dimethyltransferase (378 aa).

One can recognise a Trm1 methyltransferase domain in the interval 4–374 (KEVTEGKVRI…KGYEEIIRCV (371 aa)). The S-adenosyl-L-methionine site is built by R44, R69, D87, D114, and A115. Zn(2+) contacts are provided by C246, C249, C263, and C266.

It belongs to the class I-like SAM-binding methyltransferase superfamily. Trm1 family.

It carries out the reaction guanosine(26) in tRNA + 2 S-adenosyl-L-methionine = N(2)-dimethylguanosine(26) in tRNA + 2 S-adenosyl-L-homocysteine + 2 H(+). Functionally, dimethylates a single guanine residue at position 26 of a number of tRNAs using S-adenosyl-L-methionine as donor of the methyl groups. The chain is tRNA (guanine(26)-N(2))-dimethyltransferase from Saccharolobus islandicus (strain Y.G.57.14 / Yellowstone #1) (Sulfolobus islandicus).